A 265-amino-acid polypeptide reads, in one-letter code: tRNA pseudouridine synthase A (265 aa).

Asp-58 (nucleophile) is an active-site residue. Tyr-116 lines the substrate pocket.

Belongs to the tRNA pseudouridine synthase TruA family. As to quaternary structure, homodimer.

It carries out the reaction uridine(38/39/40) in tRNA = pseudouridine(38/39/40) in tRNA. Formation of pseudouridine at positions 38, 39 and 40 in the anticodon stem and loop of transfer RNAs. The polypeptide is tRNA pseudouridine synthase A (Neisseria gonorrhoeae (strain ATCC 700825 / FA 1090)).